The following is a 502-amino-acid chain: 2-isopropylmalate synthase (502 aa).

Mn(2+) contacts are provided by aspartate 1, histidine 189, histidine 191, and asparagine 225. One can recognise a Pyruvate carboxyltransferase domain in the interval 1–254 (DGEQALQASL…STNINHKEIY (254 aa)). Residues 379–502 (CLKFFSVQSI…VNKNLKNLKK (124 aa)) form a regulatory domain region.

The protein belongs to the alpha-IPM synthase/homocitrate synthase family. LeuA type 1 subfamily. As to quaternary structure, homodimer. Mn(2+) is required as a cofactor.

It is found in the cytoplasm. The enzyme catalyses 3-methyl-2-oxobutanoate + acetyl-CoA + H2O = (2S)-2-isopropylmalate + CoA + H(+). It functions in the pathway amino-acid biosynthesis; L-leucine biosynthesis; L-leucine from 3-methyl-2-oxobutanoate: step 1/4. Functionally, catalyzes the condensation of the acetyl group of acetyl-CoA with 3-methyl-2-oxobutanoate (2-ketoisovalerate) to form 3-carboxy-3-hydroxy-4-methylpentanoate (2-isopropylmalate). This chain is 2-isopropylmalate synthase, found in Buchnera aphidicola subsp. Uroleucon sonchi.